The primary structure comprises 217 residues: Probable transaldolase (217 aa).

The active-site Schiff-base intermediate with substrate is Lys-83.

Belongs to the transaldolase family. Type 3B subfamily.

It is found in the cytoplasm. The enzyme catalyses D-sedoheptulose 7-phosphate + D-glyceraldehyde 3-phosphate = D-erythrose 4-phosphate + beta-D-fructose 6-phosphate. It functions in the pathway carbohydrate degradation; pentose phosphate pathway; D-glyceraldehyde 3-phosphate and beta-D-fructose 6-phosphate from D-ribose 5-phosphate and D-xylulose 5-phosphate (non-oxidative stage): step 2/3. In terms of biological role, transaldolase is important for the balance of metabolites in the pentose-phosphate pathway. This chain is Probable transaldolase, found in Clostridium botulinum (strain Okra / Type B1).